The sequence spans 415 residues: Small RNA 2'-O-methyltransferase (415 aa).

Ser99 and Asp117 together coordinate S-adenosyl-L-methionine. 3 residues coordinate Mg(2+): Glu169, Glu172, and His173.

This sequence belongs to the methyltransferase superfamily. HEN1 family. Mg(2+) serves as cofactor.

It is found in the cytoplasm. It catalyses the reaction small RNA 3'-end nucleotide + S-adenosyl-L-methionine = small RNA 3'-end 2'-O-methylnucleotide + S-adenosyl-L-homocysteine + H(+). In terms of biological role, methyltransferase that adds a 2'-O-methyl group at the 3'-end of piRNAs, a class of 24 to 30 nucleotide RNAs that are generated by a Dicer-independent mechanism and are primarily derived from transposons and other repeated sequence elements. This probably protects the 3'-end of piRNAs from uridylation activity and subsequent degradation. Stabilization of piRNAs is essential for gametogenesis. This is Small RNA 2'-O-methyltransferase from Bombyx mori (Silk moth).